The sequence spans 200 residues: GTP-binding protein rho5 (200 aa).

Residue 13–20 (GDGACGKT) participates in GTP binding. Positions 35-43 (YVPTVFENY) match the Effector region motif. Residues 60–64 (DTAGQ) and 118–121 (CKVD) each bind GTP. The residue at position 197 (C197) is a Cysteine methyl ester. C197 carries S-geranylgeranyl cysteine lipidation. Residues 198–200 (ILL) constitute a propeptide, removed in mature form.

Belongs to the small GTPase superfamily. Rho family.

It is found in the cell membrane. This Schizosaccharomyces pombe (strain 972 / ATCC 24843) (Fission yeast) protein is GTP-binding protein rho5 (rho5).